Reading from the N-terminus, the 985-residue chain is Protein psiQ (985 aa).

Positions 1–20 (MMKYIYILLIFSLLFLKINS) are cleaved as a signal peptide. The PA14 domain occupies 102-247 (QSTTNPNVYA…YDECGVCQGD (146 aa)). Residues Asn-127, Asn-309, Asn-424, Asn-491, Asn-517, Asn-527, Asn-592, Asn-620, Asn-649, Asn-696, Asn-735, Asn-767, Asn-786, Asn-824, and Asn-842 are each glycosylated (N-linked (GlcNAc...) asparagine).

Belongs to the prespore-cell-inducing factor family.

Its subcellular location is the secreted. This Dictyostelium discoideum (Social amoeba) protein is Protein psiQ (psiQ).